An 825-amino-acid chain; its full sequence is Probable inorganic carbon transporter subunit DabA (825 aa).

Zn(2+) contacts are provided by Cys346, Asp348, His516, and Cys531.

This sequence belongs to the inorganic carbon transporter (TC 9.A.2) DabA family. In terms of assembly, forms a complex with DabB. Zn(2+) serves as cofactor.

The protein localises to the cell inner membrane. Functionally, part of an energy-coupled inorganic carbon pump. This chain is Probable inorganic carbon transporter subunit DabA, found in Paracidovorax citrulli (strain AAC00-1) (Acidovorax citrulli).